A 245-amino-acid chain; its full sequence is Tetraspanin-6 (245 aa).

Over 1-19 the chain is Cytoplasmic; it reads MASPSRRLQTKPVITCFKS. The chain crosses the membrane as a helical span at residues 20–40; that stretch reads VLLIYTFIFWITGVILLAVGI. Residues 41–59 are Extracellular-facing; that stretch reads WGKVSLENYFSLLNEKATN. The helical transmembrane segment at 60-80 threads the bilayer; the sequence is VPFVLIATGTVIILLGTFGCF. Residues 81–93 are Cytoplasmic-facing; sequence ATCRASAWMLKLY. Residues 94-114 traverse the membrane as a helical segment; the sequence is AMFLTLIFLVELVAAIVGFVF. Topologically, residues 115 to 208 are extracellular; the sequence is RHEIKNSFKN…IKVMTIIESE (94 aa). Asn-134 carries N-linked (GlcNAc...) asparagine glycosylation. Residues 209–229 traverse the membrane as a helical segment; the sequence is MGVVAGISFGVACFQLIGIFL. Residues 230 to 245 are Cytoplasmic-facing; that stretch reads AYCLSRAITNNQYEIV.

Belongs to the tetraspanin (TM4SF) family.

It is found in the membrane. The chain is Tetraspanin-6 (TSPAN6) from Pongo abelii (Sumatran orangutan).